Reading from the N-terminus, the 378-residue chain is Chaperone protein DnaJ (378 aa).

Residues 5 to 69 (EYYDRLGVSK…QKRAAYDQYG (65 aa)) form the J domain. Residues 134 to 216 (GVEKEVSYNR…CHGTGHEKQA (83 aa)) form a CR-type zinc finger. The Zn(2+) site is built by C147, C150, C164, C167, C190, C193, C204, and C207. CXXCXGXG motif repeat units lie at residues 147–154 (CGTCLGSG), 164–171 (CRKCHGSG), 190–197 (CDICHGSG), and 204–211 (CQTCHGTG).

Belongs to the DnaJ family. In terms of assembly, homodimer. Requires Zn(2+) as cofactor.

The protein resides in the cytoplasm. In terms of biological role, participates actively in the response to hyperosmotic and heat shock by preventing the aggregation of stress-denatured proteins and by disaggregating proteins, also in an autonomous, DnaK-independent fashion. Unfolded proteins bind initially to DnaJ; upon interaction with the DnaJ-bound protein, DnaK hydrolyzes its bound ATP, resulting in the formation of a stable complex. GrpE releases ADP from DnaK; ATP binding to DnaK triggers the release of the substrate protein, thus completing the reaction cycle. Several rounds of ATP-dependent interactions between DnaJ, DnaK and GrpE are required for fully efficient folding. Also involved, together with DnaK and GrpE, in the DNA replication of plasmids through activation of initiation proteins. This chain is Chaperone protein DnaJ, found in Streptococcus pyogenes serotype M1.